We begin with the raw amino-acid sequence, 359 residues long: Peptide chain release factor 1 (359 aa).

Gln-235 carries the post-translational modification N5-methylglutamine. The disordered stretch occupies residues 284–311 (KAESERSASRKNQVGSGDRSERIRTYNF).

The protein belongs to the prokaryotic/mitochondrial release factor family. In terms of processing, methylated by PrmC. Methylation increases the termination efficiency of RF1.

It is found in the cytoplasm. Its function is as follows. Peptide chain release factor 1 directs the termination of translation in response to the peptide chain termination codons UAG and UAA. The polypeptide is Peptide chain release factor 1 (Bartonella quintana (strain Toulouse) (Rochalimaea quintana)).